The primary structure comprises 136 residues: ATP synthase epsilon chain (136 aa).

It belongs to the ATPase epsilon chain family. In terms of assembly, F-type ATPases have 2 components, CF(1) - the catalytic core - and CF(0) - the membrane proton channel. CF(1) has five subunits: alpha(3), beta(3), gamma(1), delta(1), epsilon(1). CF(0) has three main subunits: a, b and c.

It is found in the cell membrane. Its function is as follows. Produces ATP from ADP in the presence of a proton gradient across the membrane. The polypeptide is ATP synthase epsilon chain (Ureaplasma urealyticum serovar 10 (strain ATCC 33699 / Western)).